The primary structure comprises 567 residues: Potassium-transporting ATPase potassium-binding subunit (567 aa).

Helical transmembrane passes span 5–25, 64–84, 136–156, 179–199, 254–274, 285–305, 328–350, 375–395, 421–441, 459–481, 486–506, and 529–549; these read GWLQILIYIGILLLLVKPLGG, TTYSISMLLFSLAGFLMLYFL, GFTVQNFVSAATGIALAIALI, LYVLLPACIVMTLVFVYLGVP, ISNLIQMLAIFAIGAALTNVF, WAILAAMGTLFIAGVIVTYWA, VRFGITMSSLFAVITTAASCGAV, IVGGVGAGFYGILMFVIIAIF, MLAVLCLPAGMLIFTAISVVL, ILYAYSSAAANNGSAFAGLSANT, ITLGVVMLIGRFLVIVPALAI, and LFVGLLVGTILIVGGLTFFPA.

It belongs to the KdpA family. In terms of assembly, the system is composed of three essential subunits: KdpA, KdpB and KdpC.

It is found in the cell inner membrane. Its function is as follows. Part of the high-affinity ATP-driven potassium transport (or Kdp) system, which catalyzes the hydrolysis of ATP coupled with the electrogenic transport of potassium into the cytoplasm. This subunit binds the periplasmic potassium ions and delivers the ions to the membrane domain of KdpB through an intramembrane tunnel. The polypeptide is Potassium-transporting ATPase potassium-binding subunit (Rhizobium rhizogenes (strain K84 / ATCC BAA-868) (Agrobacterium radiobacter)).